Reading from the N-terminus, the 820-residue chain is MGRLRRRQEIIDHEEEESNDDVSSRRGKLSLAETFRWLDSSEHRRIETDGHNDYKYIIHPKNRWYKAWEMFILVWAIYSSLFTPMEFGFFRGLPERLFVLDIVGQIAFLVDIVLQFFVAYRDTQTYRTVYKPTRIAFRYLKSHFLMDFIGCFPWDLIYKASGKHELVRYLLWIRLFRVRKVVEFFQRLEKDTRINYLFTRILKLLFVEVYCTHTAACIFYYLATTLPPENEGYTWIGSLKLGDYSYENFREIDLWKRYTTALYFAIVTMATVGYGDIHAVNLREMIFVMIYVSFDMVLGAYLIGNITALIVKGSNTERFRDKMNDLISFMNRKKLGRDLRSQITGHVRLQYDSHYTDTVMLQDIPASIRAKIAQLLYLPYIKKVPLFKGCSTEFINQIVIRLHEEYFLPGEVITEQGNVVDHLYFVCEGLLEALVTKTDGSEESVTLLGPHTSFGDISIICNISQPFTVRVCELCHLLRLDKQSFSNILEIYFHDGRTILNNIMEEKESNDRIKKLESDIVIHIGKQEAELALKVNSAAFQGDFYQLKSLIRSGADPNKTDYDGRSPLHLAACRGYEDITLFLIQEGVDVNLKDKFGHTPLFEAVKAGQEGVIGLLVKEGASFNLEDSGNFLCTTVAKGDSDFLKRLLSSGMNPNSEDYDHRTPLHVAASEGLFLMAKMLVEAGASVISKDRWGNSPLDEARLCGNKKLIKLLEDVKNAQSSIYPSSLRELQEERIERRKCTVFPFHPQEAKEERSRKHGVVVWIPSNLEKLIVTAAKELGLSDGASFVLLSEDQGRITDIDMISDGHKLYMISDTTDQT.

The Cytoplasmic segment spans residues 1 to 69 (MGRLRRRQEI…PKNRWYKAWE (69 aa)). A helical transmembrane segment spans residues 70 to 90 (MFILVWAIYSSLFTPMEFGFF). Over 91–97 (RGLPERL) the chain is Extracellular. A helical membrane pass occupies residues 98 to 118 (FVLDIVGQIAFLVDIVLQFFV). Topologically, residues 119–141 (AYRDTQTYRTVYKPTRIAFRYLK) are cytoplasmic. A helical membrane pass occupies residues 142 to 162 (SHFLMDFIGCFPWDLIYKASG). Topologically, residues 163 to 168 (KHELVR) are extracellular. A helical; Voltage-sensor membrane pass occupies residues 169-189 (YLLWIRLFRVRKVVEFFQRLE). At 190 to 203 (KDTRINYLFTRILK) the chain is on the cytoplasmic side. The chain crosses the membrane as a helical span at residues 204 to 224 (LLFVEVYCTHTAACIFYYLAT). Residues 225–259 (TLPPENEGYTWIGSLKLGDYSYENFREIDLWKRYT) lie on the Extracellular side of the membrane. The segment at residues 260 to 279 (TALYFAIVTMATVGYGDIHA) is an intramembrane region (pore-forming). At 280 to 285 (VNLREM) the chain is on the extracellular side. A helical membrane pass occupies residues 286 to 306 (IFVMIYVSFDMVLGAYLIGNI). Topologically, residues 307-820 (TALIVKGSNT…YMISDTTDQT (514 aa)) are cytoplasmic. Position 386 to 508 (386 to 508 (LFKGCSTEFI…ILNNIMEEKE (123 aa))) interacts with a nucleoside 3',5'-cyclic phosphate. 6 ANK repeats span residues 528–559 (EAEL…DPNK), 563–592 (DGRS…DVNL), 596–625 (FGHT…SFNL), 627–656 (DSGN…NPNS), 660–689 (DHRT…SVIS), and 693–722 (WGNS…AQSS). Residues 740 to 820 (KCTVFPFHPQ…YMISDTTDQT (81 aa)) enclose the KHA domain.

It belongs to the potassium channel family. Plant (TC 1.A.1.4) subfamily. The potassium channel is probably composed of a homo- or heterotetrameric complex of pore-forming subunits. In terms of tissue distribution, expressed in guard cell-containing tissues, in root epidermal cells and in root hairs. Detected in vascular cells of the root and shoot.

The protein localises to the membrane. Functionally, major selective outward-rectifying potassium channel of the guard cell membrane. Involved in regulation of stomatal movements according to the water status. Assuming opened or closed conformations in response to the voltage difference across the membrane, the channel is activated by depolarization. Conductance of the channel is modulated in a potassium-dependent fashion. May interact with the cytoskeleton or with regulatory proteins. The chain is Potassium channel GORK (GORK) from Arabidopsis thaliana (Mouse-ear cress).